A 416-amino-acid polypeptide reads, in one-letter code: Calreticulin (416 aa).

The first 17 residues, 1–17, serve as a signal peptide directing secretion; sequence MLLSVPLLLGLLGLAAA. Residues 18–197 form an N-domain region; sequence DPAIYFKEQF…NSQVESGSLE (180 aa). Glutamine 26 is a binding site for Ca(2+). Lysine 48 is subject to N6-acetyllysine. The Ca(2+) site is built by lysine 62 and lysine 64. Residue lysine 64 is modified to N6-(2-hydroxyisobutyryl)lysine. Cysteine 105 and cysteine 137 are joined by a disulfide. Positions 109, 111, 128, and 135 each coordinate an alpha-D-glucoside. An N6-acetyllysine modification is found at lysine 159. The stretch at 191 to 202 is one 1-1 repeat; it reads VESGSLEDDWDF. The 4 X approximate repeats stretch occupies residues 191-255; that stretch reads VESGSLEDDW…DAKKPEDWDE (65 aa). Residues 193–277 form a disordered region; it reads SGSLEDDWDF…NPEYKGEWKP (85 aa). A P-domain region spans residues 198–308; sequence DDWDFLPPKK…YSPDANIYAY (111 aa). Basic and acidic residues predominate over residues 207-251; sequence KIKDPDAAKPEDWDERAKIDDPTDSKPEDWDKPEHIPDPDAKKPE. Lysine 209 bears the N6-acetyllysine mark. 6 tandem repeats follow at residues 210–221, 227–238, 244–255, 259–269, 273–283, and 287–297. Residues 237–270 are interaction with PPIB; the sequence is DKPEHIPDPDAKKPEDWDEEMDGEWEPPVIQNPE. A compositionally biased stretch (acidic residues) spans 252–261; that stretch reads DWDEEMDGEW. Residues 259–297 are 3 X approximate repeats; it reads GEWEPPVIQNPEYKGEWKPRQIDNPDYKGTWIHPEIDNP. A C-domain region spans residues 309 to 416; the sequence is DSFAVLGLDL…DATGQAKDEL (108 aa). Aspartate 317 contacts an alpha-D-glucoside. Aspartate 328 contributes to the Ca(2+) binding site. A disordered region spans residues 350 to 416; the sequence is TKAAEKQMKD…DATGQAKDEL (67 aa). Residues 352–379 show a composition bias toward basic and acidic residues; it reads AAEKQMKDKQDEEQRLKEEEEDKKRKEE. Residues 380-408 show a composition bias toward acidic residues; that stretch reads EEAEDKEDEDDRDEDEDEEDEKEEDEEDA. Residues 413–416 carry the Prevents secretion from ER motif; sequence KDEL.

Belongs to the calreticulin family. In terms of assembly, monomer. Component of an EIF2 complex at least composed of CELF1/CUGBP1, CALR, CALR3, EIF2S1, EIF2S2, HSP90B1 and HSPA5. Interacts with GABARAP, NR3C1 and TRIM21. Interacts with PPIB and SPACA9. Interacts (via P-domain) with PDIA5. Interacts with PDIA3/ERp57. Interacts with CLCC1. As to expression, predentin and odontoblast.

It is found in the endoplasmic reticulum lumen. It localises to the cytoplasm. Its subcellular location is the cytosol. The protein resides in the secreted. The protein localises to the extracellular space. It is found in the extracellular matrix. It localises to the cell surface. Its subcellular location is the sarcoplasmic reticulum lumen. The protein resides in the cytoplasmic vesicle. The protein localises to the secretory vesicle. It is found in the cortical granule. It localises to the cytolytic granule. Calcium-binding chaperone that promotes folding, oligomeric assembly and quality control in the endoplasmic reticulum (ER) via the calreticulin/calnexin cycle. This lectin interacts transiently with almost all of the monoglucosylated glycoproteins that are synthesized in the ER. Interacts with the DNA-binding domain of NR3C1 and mediates its nuclear export. Involved in maternal gene expression regulation. May participate in oocyte maturation via the regulation of calcium homeostasis. Present in the cortical granules of non-activated oocytes, is exocytosed during the cortical reaction in response to oocyte activation and might participate in the block to polyspermy. This chain is Calreticulin (Calr), found in Rattus norvegicus (Rat).